Reading from the N-terminus, the 78-residue chain is High temperature lethal protein 1 (78 aa).

Position 2 is an N-acetylserine (Ser2).

As to quaternary structure, interacts directly with RSC8. Component of the two forms of the RSC complex composed of at least either RSC1 or RSC2, and ARP7, ARP9, LDB7, NPL6, RSC3, RSC30, RSC4, RSC58, RSC6, RSC8, RSC9, SFH1, STH1, HTL1 and probably RTT102. The complexes interact with histone and histone variant components of centromeric chromatin. Component of a fungal-specific module (HTL1-LDB7-NPL6-RSC3-RSC30) within the RSC complex.

The protein resides in the nucleus. Functionally, required for cell cycle progression through G2/M transition at temperatures higher than 33 degrees Celsius. Component of the chromatin structure-remodeling complex (RSC), which is involved in transcription regulation and nucleosome positioning. RSC is responsible for the transfer of a histone octamer from a nucleosome core particle to naked DNA. The reaction requires ATP and involves an activated RSC-nucleosome intermediate. Remodeling reaction also involves DNA translocation, DNA twist and conformational change. As a reconfigurer of centromeric and flanking nucleosomes, RSC complex is required both for proper kinetochore function in chromosome segregation and, via a PKC1-dependent signaling pathway, for organization of the cellular cytoskeleton. When associated with the RSC complex, may act coordinately with PKC1 to regulate G2/M transition. Together with LDB7, NPL6, RSC3, RSC30 components, defines a fungal-specific module within the RSC complex that plays a role in many cellular functions including the maintenance of cell wall integrity. This is High temperature lethal protein 1 (HTL1) from Saccharomyces cerevisiae (strain ATCC 204508 / S288c) (Baker's yeast).